A 328-amino-acid chain; its full sequence is Protein-glutamine deamidase Cif (328 aa).

The segment at 1–68 (MLEHGVMKIP…TNRTGENPMI (68 aa)) is disordered. A compositionally biased stretch (polar residues) spans 52-63 (RSSSISNTNRTG). Residues cysteine 156, histidine 211, and glutamine 231 contribute to the active site.

It belongs to the Cif family.

Its subcellular location is the secreted. The protein resides in the host nucleus. The enzyme catalyses L-glutaminyl-[protein] + H2O = L-glutamyl-[protein] + NH4(+). Functionally, protein-glutamine deamidase effector that inhibits the host cell cycle and other key cellular processes such as the actin network and programmed-cell death. Acts by mediating the side chain deamidation of 'Gln-40' of host NEDD8, converting it to glutamate, thereby abolishing the activity of cullin-RING-based E3 ubiquitin-protein ligase complexes (CRL complexes). Inactivation of CRL complexes prevents ubiquitination and subsequent degradation of the cyclin-dependent kinase inhibitors CDKN1A/p21 and CDKN1B/p27, leading to G1 and G2 cell cycle arrests in host cells. Deamidation of 'Gln-40' of host NEDD8 also triggers macrophage-specific programmed cell death. Also able to catalyze deamidation of 'Gln-40' of host ubiquitin in vitro; however, NEDD8 constitutes the preferred substrate in vivo. Also regulates the host NF-kappa-B signaling via activation of MAPK/ERK cascade: activation of host MAPK/ERK cascade is independent of CRL complexes inhibition, suggesting that Cif has other host protein targets than NEDD8. This chain is Protein-glutamine deamidase Cif, found in Burkholderia pseudomallei (strain K96243).